The primary structure comprises 335 residues: Transcriptional coactivator YAP1-B (335 aa).

The span at 1–13 (MEPGSQQQPSAPG) shows a compositional bias: low complexity. Positions 1 to 21 (MEPGSQQQPSAPGQQPPPVGH) are disordered. Phosphoserine; by LATS1 and LATS2 is present on Ser-30. Polar residues predominate over residues 114–124 (MNQQRLSQSAP). The tract at residues 114–146 (MNQQRLSQSAPVKSPPALQPQSPPSGVLGSGGN) is disordered. Residues 126 to 136 (KSPPALQPQSP) are compositionally biased toward pro residues. The interval 137-335 (PSGVLGSGGN…LDKESFLTWL (199 aa)) is transactivation domain. A coiled-coil region spans residues 145–173 (GNQQMRLQQLQMEKERLRLKHQELLRQVR).

The protein belongs to the YAP1 family. Post-translationally, phosphorylated by lats1 and lats2; leading to cytoplasmic translocation and inactivation.

The protein resides in the cytoplasm. The protein localises to the nucleus. It localises to the cell junction. It is found in the tight junction. Its subcellular location is the cell membrane. Functionally, transcriptional regulator which can act both as a coactivator and a corepressor and is the critical downstream regulatory target in the Hippo signaling pathway that plays a pivotal role in organ size control and tumor suppression by restricting proliferation and promoting apoptosis. Plays a key role in tissue tension and 3D tissue shape by regulating cortical actomyosin network formation. The protein is Transcriptional coactivator YAP1-B of Xenopus laevis (African clawed frog).